Here is a 214-residue protein sequence, read N- to C-terminus: Transcription factor MYB24 (214 aa).

HTH myb-type domains are found at residues 14-66 (DAEV…LNYL) and 67-121 (RPDV…QKYI). 2 consecutive DNA-binding regions (H-T-H motif) follow at residues 42–66 (WNSL…LNYL) and 94–117 (WSKI…RTKI).

As to quaternary structure, interacts (via N-terminus) with TIFY10A/JAZ1, TIFY5A/JAZ8 AND TIFY3A/JAZ11. Expressed specifically in flowers. Expressed in all four whorls of the flower and in the vascular tissue of stamen filament and sepals. Detected in male and female gametophytes, especially in microspores and ovules. Weakly expressed in petals and the upper part of pistils.

The protein localises to the nucleus. Transcription factor acting redundantly with MYB21 and MYB57 to control stamen filament elongation in the late developed flowers. Contributes with MYB21 to induction of MYB108 by jasmonate. Repressed at the transcript levels by DELLA proteins. The chain is Transcription factor MYB24 (MYB24) from Arabidopsis thaliana (Mouse-ear cress).